The following is a 1207-amino-acid chain: DNA-directed RNA polymerase subunit beta' (1207 aa).

Zn(2+)-binding residues include Cys60, Cys62, Cys75, and Cys78. Mg(2+) is bound by residues Asp450, Asp452, and Asp454. Residues Cys819, Cys893, Cys900, and Cys903 each contribute to the Zn(2+) site.

Belongs to the RNA polymerase beta' chain family. As to quaternary structure, the RNAP catalytic core consists of 2 alpha, 1 beta, 1 beta' and 1 omega subunit. When a sigma factor is associated with the core the holoenzyme is formed, which can initiate transcription. Mg(2+) is required as a cofactor. Requires Zn(2+) as cofactor.

The enzyme catalyses RNA(n) + a ribonucleoside 5'-triphosphate = RNA(n+1) + diphosphate. DNA-dependent RNA polymerase catalyzes the transcription of DNA into RNA using the four ribonucleoside triphosphates as substrates. In Streptococcus pyogenes serotype M3 (strain SSI-1), this protein is DNA-directed RNA polymerase subunit beta'.